The following is a 428-amino-acid chain: Histone deacetylase 3 (428 aa).

Residues 3–316 (KTVAYFYDPD…WTYETSLLVE (314 aa)) are histone deacetylase. Residues His-17, Gly-21, and Lys-25 each contribute to the 1D-myo-inositol 1,4,5,6-tetrakisphosphate site. His-135 is a catalytic residue. Zn(2+) is bound by residues Asp-170, His-172, and Asp-259. Residue Arg-265 participates in 1D-myo-inositol 1,4,5,6-tetrakisphosphate binding. Composition is skewed to basic and acidic residues over residues 388–405 (DRTDEADAEERGPEENYS) and 415–428 (DGDHDNDKESDVEI). A disordered region spans residues 388–428 (DRTDEADAEERGPEENYSRPEAPNEFYDGDHDNDKESDVEI). A Phosphoserine modification is found at Ser-424.

Belongs to the histone deacetylase family. HD type 1 subfamily. In terms of assembly, interacts with HDAC7 and HDAC9. Interacts with DAXX, KDM4A, HDAC10 and DACH1. Found in a complex with NCOR1 and NCOR2. Component of the N-Cor repressor complex, at least composed of NCOR1, NCOR2, HDAC3, TBL1X, TBL1R, CORO2A and GPS2. Interacts with BCOR, MJD2A/JHDM3A, NRIP1, PRDM6 and SRY. Interacts with BTBD14B. Interacts with GLIS2. Interacts (via the DNA-binding domain) with NR2C1; the interaction recruits phosphorylated NR2C1 to PML bodies for sumoylation. Component of the Notch corepressor complex. Interacts with CBFA2T3 and NKAP. Interacts with APEX1; the interaction is not dependent on the acetylated status of APEX1. Interacts with ZMYND15. Interacts with SMRT/NCOR2 and BCL6 on DNA enhancer elements. Interacts with INSM1. Interacts with XBP1 isoform 1; the interaction occurs in endothelial cell (EC) under disturbed flow. Interacts (via C-terminus) with CCAR2 (via N-terminus). Interacts with and deacetylates MEF2D. Interacts with BEND3. Interacts with NKAPL. Interacts with DHX36; this interaction occurs in a RNA-dependent manner. Interacts weakly with CRY1; this interaction is enhanced in the presence of FBXL3. Interacts with FBXL3 and BMAL1. Interacts with NCOR1. Interacts with RARA. Interacts with SETD5. As to quaternary structure, (Microbial infection) Interacts with human cytomegalovirus (HHV-5) immediate early protein IE1; this interaction decreases histone acetylation and allows transcriptional activation by the virus. Requires Zn(2+) as cofactor. In terms of processing, sumoylated in vitro. Deubiquitinated on 'Lys-63'-linked ubiquitin chains by USP38; leading to a decreased level of histone acetylation. In terms of tissue distribution, widely expressed.

The protein resides in the nucleus. It is found in the chromosome. The protein localises to the cytoplasm. Its subcellular location is the cytosol. It catalyses the reaction N(6)-acetyl-L-lysyl-[histone] + H2O = L-lysyl-[histone] + acetate. The enzyme catalyses N(6)-acetyl-L-lysyl-[protein] + H2O = L-lysyl-[protein] + acetate. The catalysed reaction is N(6)-(2E)-butenoyl-L-lysyl-[protein] + H2O = (2E)-2-butenoate + L-lysyl-[protein]. It carries out the reaction N(6)-(2-hydroxyisobutanoyl)-L-lysyl-[protein] + H2O = 2-hydroxy-2-methylpropanoate + L-lysyl-[protein]. It catalyses the reaction N(6)-[(S)-lactoyl]-L-lysyl-[protein] + H2O = (S)-lactate + L-lysyl-[protein]. Its activity is regulated as follows. Inositol tetraphosphate (1D-myo-inositol 1,4,5,6-tetrakisphosphate) promotes the histone deacetylase activity by acting as an intermolecular glue between HDAC3 and NCOR2, thereby promoting its association with the N-Cor complex, a prerequisite for the histone deacetylase activity. Histone deacetylase that catalyzes the deacetylation of lysine residues on the N-terminal part of the core histones (H2A, H2B, H3 and H4), and some other non-histone substrates. Histone deacetylation gives a tag for epigenetic repression and plays an important role in transcriptional regulation, cell cycle progression and developmental events. Histone deacetylases act via the formation of large multiprotein complexes, such as N-Cor repressor complex, which activate the histone deacetylase activity. Participates in the BCL6 transcriptional repressor activity by deacetylating the H3 'Lys-27' (H3K27) on enhancer elements, antagonizing EP300 acetyltransferase activity and repressing proximal gene expression. Acts as a molecular chaperone for shuttling phosphorylated NR2C1 to PML bodies for sumoylation. Contributes, together with XBP1 isoform 1, to the activation of NFE2L2-mediated HMOX1 transcription factor gene expression in a PI(3)K/mTORC2/Akt-dependent signaling pathway leading to endothelial cell (EC) survival under disturbed flow/oxidative stress. Regulates both the transcriptional activation and repression phases of the circadian clock in a deacetylase activity-independent manner. During the activation phase, promotes the accumulation of ubiquitinated BMAL1 at the E-boxes and during the repression phase, blocks FBXL3-mediated CRY1/2 ubiquitination and promotes the interaction of CRY1 and BMAL1. The NCOR1-HDAC3 complex regulates the circadian expression of the core clock gene BMAL1 and the genes involved in lipid metabolism in the liver. Also functions as a deacetylase for non-histone targets, such as KAT5, MEF2D, MAPK14, RARA and STAT3. Serves as a corepressor of RARA, mediating its deacetylation and repression, leading to inhibition of RARE DNA element binding. In association with RARA, plays a role in the repression of microRNA-10a and thereby in the inflammatory response. In addition to protein deacetylase activity, also acts as a protein-lysine deacylase by recognizing other acyl groups: catalyzes removal of (2E)-butenoyl (crotonyl), lactoyl (lactyl) and 2-hydroxyisobutanoyl (2-hydroxyisobutyryl) acyl groups from lysine residues, leading to protein decrotonylation, delactylation and de-2-hydroxyisobutyrylation, respectively. Catalyzes decrotonylation of MAPRE1/EB1. Mediates delactylation NBN/NBS1, thereby inhibiting DNA double-strand breaks (DSBs) via homologous recombination (HR). This chain is Histone deacetylase 3 (HDAC3), found in Homo sapiens (Human).